A 182-amino-acid chain; its full sequence is Adenine phosphoribosyltransferase (182 aa).

It belongs to the purine/pyrimidine phosphoribosyltransferase family. Homodimer.

It is found in the cytoplasm. It carries out the reaction AMP + diphosphate = 5-phospho-alpha-D-ribose 1-diphosphate + adenine. It functions in the pathway purine metabolism; AMP biosynthesis via salvage pathway; AMP from adenine: step 1/1. Catalyzes a salvage reaction resulting in the formation of AMP, that is energically less costly than de novo synthesis. The protein is Adenine phosphoribosyltransferase of Streptomyces coelicolor (strain ATCC BAA-471 / A3(2) / M145).